The following is a 595-amino-acid chain: uncharacterized protein (595 aa).

Residues methionine 1–cysteine 21 form a disordered region. 11 WD repeats span residues glutamate 56–lysine 95, alanine 100–phenylalanine 143, glycine 144–serine 184, valine 187–glutamate 226, alanine 229–glutamate 268, glycine 313–leucine 352, serine 356–aspartate 393, lysine 433–valine 472, aspartate 477–serine 516, phenylalanine 520–alanine 559, and histidine 564–threonine 594.

Belongs to the WD repeat AIP1 family.

This is an uncharacterized protein from Schizosaccharomyces pombe (strain 972 / ATCC 24843) (Fission yeast).